Reading from the N-terminus, the 319-residue chain is tRNA-cytidine(32) 2-sulfurtransferase (319 aa).

The PP-loop motif signature appears at 49–54 (SGGKDS). Residues cysteine 124, cysteine 127, and cysteine 215 each coordinate [4Fe-4S] cluster. The disordered stretch occupies residues 276-319 (DGDTAFDKEEFRDPAPDADDVEDAPKKRTISILDSRGKESGCGA). 2 stretches are compositionally biased toward basic and acidic residues: residues 280–290 (AFDKEEFRDPA) and 310–319 (SRGKESGCGA).

The protein belongs to the TtcA family. In terms of assembly, homodimer. Mg(2+) serves as cofactor. [4Fe-4S] cluster is required as a cofactor.

The protein localises to the cytoplasm. It carries out the reaction cytidine(32) in tRNA + S-sulfanyl-L-cysteinyl-[cysteine desulfurase] + AH2 + ATP = 2-thiocytidine(32) in tRNA + L-cysteinyl-[cysteine desulfurase] + A + AMP + diphosphate + H(+). It participates in tRNA modification. In terms of biological role, catalyzes the ATP-dependent 2-thiolation of cytidine in position 32 of tRNA, to form 2-thiocytidine (s(2)C32). The sulfur atoms are provided by the cysteine/cysteine desulfurase (IscS) system. In Chromobacterium violaceum (strain ATCC 12472 / DSM 30191 / JCM 1249 / CCUG 213 / NBRC 12614 / NCIMB 9131 / NCTC 9757 / MK), this protein is tRNA-cytidine(32) 2-sulfurtransferase.